We begin with the raw amino-acid sequence, 438 residues long: Putative pectate lyase 14 (438 aa).

An N-terminal signal peptide occupies residues 1-26 (MVVARTLFSISATLIIFLALFLHVNA). N-linked (GlcNAc...) asparagine glycans are attached at residues asparagine 40, asparagine 46, and asparagine 73. Residues aspartate 236, aspartate 260, and aspartate 264 each contribute to the Ca(2+) site. The active site involves arginine 316.

Belongs to the polysaccharide lyase 1 family. The cofactor is Ca(2+).

The enzyme catalyses Eliminative cleavage of (1-&gt;4)-alpha-D-galacturonan to give oligosaccharides with 4-deoxy-alpha-D-galact-4-enuronosyl groups at their non-reducing ends.. It functions in the pathway glycan metabolism; pectin degradation; 2-dehydro-3-deoxy-D-gluconate from pectin: step 2/5. The sequence is that of Putative pectate lyase 14 from Arabidopsis thaliana (Mouse-ear cress).